Reading from the N-terminus, the 661-residue chain is MFSIIFSNPVKPFNSVIIHQIRFFSRDPFPNKVQHYLYRANLIDSIRLSLRSPTTSDRTLASLLNHRLLDSFVVKNALRSSPSVSSAWSIFKTLSHKSPRFSFETETLHAFATVLAKFQRSSELNSLIGVVNAWKFRNVHFSFMNLLNLYATAGDFDSVLKTWDEYRCSGEEKKGCTESYNIVMQVYMTLGKDSEAVQTFDQIINEGGIPNSRTFTIMIEHLVKLGNLDAAMKIFETLPLMRITRTLKHYSVLVEAFVDAQRFDEVKTLIAEMKSDGKFPSRRMLEPLKRMREAGFEHETEEFLREMLPDERIKDISMYSMDNPSDSEDEGDEYKDDVNEAQVKLKPWLDPKALATSLKKWSSDAVTALEEANFVWTNLLVCKMLRNFRAPETAWSFFCWVAIQPGFTHDAYTIERMMAMLARNGQVELVDKLISKVRIEGIKLPFSTIRLIIDLYGISKKPEAAIKVFNEDRTLCGSISDFNLMLLYSSLLRTLTKCKRNAEALETLEDMMLTGVSPDIQTFSGLMYHFALQGEIQTVERLFSMVRQIGLEPDPYMLKLLVQAYCRCERSVLAYRVFQDMKDSNLMPDRETKELLVKSLWREEKRKEAAAVEESYEEENDNKNSSNVLRLALKGHVWTISSTDISRVYNLYRDCVLKTST.

PPR repeat units follow at residues 139 to 173 (VHFS…GEEK), 176 to 210 (CTES…GGIP), 211 to 245 (NSRT…RITR), 246 to 280 (TLKH…GKFP), 410 to 444 (DAYT…GIKL), 445 to 475 (PFST…DRTL), 484 to 518 (LMLL…GVSP), 519 to 553 (DIQT…GLEP), and 554 to 588 (DPYM…NLMP).

Belongs to the PPR family. P subfamily.

This chain is Pentatricopeptide repeat-containing protein At5g66631, found in Arabidopsis thaliana (Mouse-ear cress).